We begin with the raw amino-acid sequence, 251 residues long: NADPH-dependent oxidoreductase (251 aa).

This sequence belongs to the flavin oxidoreductase frp family. The cofactor is FMN.

Functionally, reduces FMN, organic nitro compounds and disulfide DTNB. Involved in maintenance of the cellular redox state and the disulfide stress response. This chain is NADPH-dependent oxidoreductase (nfrA), found in Staphylococcus aureus (strain MRSA252).